A 203-amino-acid chain; its full sequence is Secreted phosphoprotein 24 (203 aa).

An N-terminal signal peptide occupies residues 1-23 (MEKMVMKMLVIFVFGMNHWTCTG). 2 disulfides stabilise this stretch: cysteine 86-cysteine 97 and cysteine 110-cysteine 128. A Phosphoserine modification is found at serine 90. Phosphoserine is present on residues serine 138, serine 139, serine 166, and serine 175. The segment at 155 to 174 (NSHLLGLTPDRSRGEPLYER) is disordered. The span at 164 to 174 (DRSRGEPLYER) shows a compositional bias: basic and acidic residues.

Belongs to the SPP2 family. Multiply phosphorylated at serine residues. In terms of processing, phosphorylation sites are present in the extracellular medium.

The protein localises to the secreted. Functionally, could coordinate an aspect of bone turnover. The chain is Secreted phosphoprotein 24 (SPP2) from Ovis aries (Sheep).